A 253-amino-acid polypeptide reads, in one-letter code: uncharacterized protein (253 aa).

Positions 175 to 184 (NPTQTSPGKP) are enriched in polar residues. A disordered region spans residues 175 to 253 (NPTQTSPGKP…ATENEDRLPS (79 aa)). Phosphoserine is present on Ser180. 2 stretches are compositionally biased toward low complexity: residues 185 to 196 (STSESSQTDTST) and 203 to 214 (TPTTTRASSYTT). Residues 215-242 (LVSTSNQVSNEAEASAVETSANQAQNTE) are compositionally biased toward polar residues.

It belongs to the TRAPP small subunits family. BET3 subfamily.

This is an uncharacterized protein from Schizosaccharomyces pombe (strain 972 / ATCC 24843) (Fission yeast).